Reading from the N-terminus, the 351-residue chain is MKRVCIVGASGFTGGELLRILLQHSGVEVVCATSRKFKGEYVYRVHPNLRGFTQLKFVEPTIDAALKADVVFLALPHGESVKWVPQLYESGVAVFDLSADFRLKDPNAYVEWYKWPQPHPYPDLLAKAVYGQPELHREELVGARLVAVPGCMATASILMLAPLAKFGLISAPPVVDAKIGSSGAGAEGSVVDLHSFRTYVVRPYEPVHHRHIAEIEQELSRLAGKEVKVAFTPHAVDIVRGIFTTGHVFVEKMPTEADLWKYYRALFGDSKFIRIVKDRLGISRYPNVKYVLGSNLVDLGFELDARMKRVVTFAAIDNLVRGAAGQAVQAFNIAMGFPEDEGLRHIPVAPI.

NADP(+)-binding positions include 10-13 (SGFT) and 34-36 (SRK). Cysteine 151 is an active-site residue. Residue asparagine 318 participates in NADP(+) binding.

The protein belongs to the NAGSA dehydrogenase family. Type 1 subfamily. LysY sub-subfamily.

It is found in the cytoplasm. The enzyme catalyses [amino-group carrier protein]-C-terminal-N-(1-carboxy-5-oxopentan-1-yl)-L-glutamine + phosphate + NADP(+) = [amino-group carrier protein]-C-terminal-N-(1-carboxy-5-phosphooxy-5-oxopentan-1-yl)-L-glutamine + NADPH + H(+). It catalyses the reaction [amino-group carrier protein]-C-terminal-gamma-(L-glutamyl-5-semialdehyde)-L-glutamate + phosphate + NADP(+) = [amino-group carrier protein]-C-terminal-gamma-(5-phospho-L-glutamyl)-L-glutamate + NADPH + H(+). It participates in amino-acid biosynthesis; L-lysine biosynthesis via AAA pathway; L-lysine from L-alpha-aminoadipate (Thermus route): step 3/5. The protein operates within amino-acid biosynthesis; L-arginine biosynthesis. Involved in both the arginine and lysine biosynthetic pathways. This Pyrobaculum calidifontis (strain DSM 21063 / JCM 11548 / VA1) protein is Putative [LysW]-L-2-aminoadipate/[LysW]-L-glutamate phosphate reductase.